A 399-amino-acid chain; its full sequence is Glucose-1-phosphate adenylyltransferase (399 aa).

Alpha-D-glucose 1-phosphate contacts are provided by residues Tyr-100, Gly-165, 180 to 181 (EK), and Ser-191.

The protein belongs to the bacterial/plant glucose-1-phosphate adenylyltransferase family. Homotetramer.

The catalysed reaction is alpha-D-glucose 1-phosphate + ATP + H(+) = ADP-alpha-D-glucose + diphosphate. It functions in the pathway glycan biosynthesis; glycogen biosynthesis. Its function is as follows. Involved in the biosynthesis of ADP-glucose, a building block required for the elongation reactions to produce glycogen. Catalyzes the reaction between ATP and alpha-D-glucose 1-phosphate (G1P) to produce pyrophosphate and ADP-Glc. The chain is Glucose-1-phosphate adenylyltransferase from Desulforamulus reducens (strain ATCC BAA-1160 / DSM 100696 / MI-1) (Desulfotomaculum reducens).